Reading from the N-terminus, the 133-residue chain is Ribonuclease P protein component (133 aa).

It belongs to the RnpA family. Consists of a catalytic RNA component (M1 or rnpB) and a protein subunit.

The catalysed reaction is Endonucleolytic cleavage of RNA, removing 5'-extranucleotides from tRNA precursor.. Its function is as follows. RNaseP catalyzes the removal of the 5'-leader sequence from pre-tRNA to produce the mature 5'-terminus. It can also cleave other RNA substrates such as 4.5S RNA. The protein component plays an auxiliary but essential role in vivo by binding to the 5'-leader sequence and broadening the substrate specificity of the ribozyme. The polypeptide is Ribonuclease P protein component (Synechococcus sp. (strain JA-2-3B'a(2-13)) (Cyanobacteria bacterium Yellowstone B-Prime)).